The chain runs to 284 residues: Avenin-like b10 (284 aa).

Positions M1 to A18 are cleaved as a signal peptide.

The protein belongs to the prolamin family. In terms of processing, contains disulfide bonds.

Functionally, seed storage protein. Might be integrated via inter-chain disulfide bonds within the glutenin polymer. This Triticum aestivum (Wheat) protein is Avenin-like b10.